Consider the following 312-residue polypeptide: Serine/threonine-protein phosphatase PP1 isozyme 5 (312 aa).

At Ala-2 the chain carries N-acetylalanine. Residues Asp-70, His-72, Asp-98, and Asn-130 each coordinate Mn(2+). His-131 (proton donor) is an active-site residue. 2 residues coordinate Mn(2+): His-179 and His-254.

It belongs to the PPP phosphatase family. PP-1 subfamily. Requires Mn(2+) as cofactor.

Its subcellular location is the nucleus. The protein localises to the cytoplasm. It carries out the reaction O-phospho-L-seryl-[protein] + H2O = L-seryl-[protein] + phosphate. The catalysed reaction is O-phospho-L-threonyl-[protein] + H2O = L-threonyl-[protein] + phosphate. Its activity is regulated as follows. Phosphatase activity is strongly reduced by the protein phosphatase inhibitor 2 (I-2). Functionally, serine/threonine-protein phosphatase that possesses phosphatase activity toward para-nitrophenyl phosphate (pNPP) in vitro. This is Serine/threonine-protein phosphatase PP1 isozyme 5 from Arabidopsis thaliana (Mouse-ear cress).